The following is a 215-amino-acid chain: ER lumen protein-retaining receptor 3 (215 aa).

Topologically, residues 1–4 are lumenal; sequence MNIF. The chain crosses the membrane as a helical span at residues 5-24; the sequence is RLSGDVCHLIAIIILFLKIW. Topologically, residues 25–32 are cytoplasmic; that stretch reads RSKSCAGI. Residues 33 to 52 traverse the membrane as a helical segment; it reads SGKSQVLFALVFTTRYLDLF. The tract at residues 47-48 is interaction with the K-D-E-L motif on target proteins; the sequence is RY. Topologically, residues 53 to 58 are lumenal; that stretch reads TSYISA. Residues 59 to 79 traverse the membrane as a helical segment; it reads YNTVMKVVYLLLAYSTVGLIF. At 80–92 the chain is on the cytoplasmic side; sequence FRFRNSYDSESDS. A helical transmembrane segment spans residues 93-110; sequence FRVEFLLVPVAGLSFLEN. The Lumenal portion of the chain corresponds to 111 to 116; it reads YAFTPL. A helical transmembrane segment spans residues 117-135; that stretch reads EILWTFSIYLESVAILPQL. Topologically, residues 136-149 are cytoplasmic; it reads FMITKTGEAESITA. The helical transmembrane segment at 150 to 168 threads the bilayer; the sequence is HYLLFLGLYRALYLANWLW. The tract at residues 159–169 is interaction with the K-D-E-L motif on target proteins; sequence RALYLANWLWR. The Lumenal portion of the chain corresponds to 169–178; that stretch reads RFHTEGFYDQ. A helical transmembrane segment spans residues 179–199; it reads IAVVSGVVQTIFYCDFFYLYF. Over 200–215 the chain is Cytoplasmic; the sequence is TRVLRGSGKMSLPMPV. The important for recycling of cargo proteins with the sequence motif K-D-E-L from the Golgi to the endoplasmic reticulum stretch occupies residues 204–208; it reads RGSGK.

Belongs to the ERD2 family.

The protein resides in the endoplasmic reticulum membrane. The protein localises to the golgi apparatus membrane. It is found in the cytoplasmic vesicle. It localises to the COPI-coated vesicle membrane. In terms of biological role, receptor for the C-terminal sequence motif K-D-E-L that is present on endoplasmic reticulum resident proteins and that mediates their recycling from the Golgi back to the endoplasmic reticulum. The chain is ER lumen protein-retaining receptor 3 (kdelr3) from Danio rerio (Zebrafish).